Reading from the N-terminus, the 1013-residue chain is Polyprotein of EF-Ts, chloroplastic (1013 aa).

A chloroplast-targeting transit peptide spans 1 to 43 (MLRELGRTATVKAHGRSVLRPVRGPAGRRQVAFTGVRPSVRVF). The S1 motif 1 domain occupies 64-133 (GSEYEGTVTT…EKKRVSLELK (70 aa)). Over residues 141–150 (SAEESDDIIT) the composition is skewed to acidic residues. A disordered region spans residues 141–163 (SAEESDDIITEPDREGADATDDD). The S1 motif 2 domain occupies 227–331 (MEEVTGKVAR…DGRGISLTHF (105 aa)). The tract at residues 772–798 (QAKAAAPAAPKKEEPKKEEPKKATVAV) is disordered. Positions 781–793 (PKKEEPKKEEPKK) are enriched in basic and acidic residues.

It belongs to the EF-Ts family. Component of the chloroplast ribosome 30S and 70S subunits, as well as polysomes. In terms of assembly, component of the chloroplast ribosome 70S subunit, and at low levels, present in polysomes. As to quaternary structure, associates transiently with chloroplast polysomes.

It is found in the plastid. The protein localises to the chloroplast. Its function is as follows. Associates with the EF-Tu.GDP complex and induces the exchange of GDP to GTP. It remains bound to the aminoacyl-tRNA.EF-Tu.GTP complex up to the GTP hydrolysis stage on the ribosome. Binds to psbD and psbA mRNAs 5'-untranslated regions (UTRs) in vitro. The chain is Polyprotein of EF-Ts, chloroplastic from Chlamydomonas reinhardtii (Chlamydomonas smithii).